The sequence spans 503 residues: Chromodomain Y-like protein 2 (503 aa).

In terms of domain architecture, Chromo spans 7–67; it reads YEVERIVDKR…LHLSKDKRVK (61 aa). The interval 66–177 is disordered; sequence VKSGKQAGAS…GNGSHQPDLE (112 aa). A compositionally biased stretch (basic and acidic residues) spans 88 to 98; the sequence is RLSHRPLEPGK. The segment covering 101-120 has biased composition (basic residues); sequence PSSHKRKRVNSPLSRPKKGS. A compositionally biased stretch (polar residues) spans 130–140; sequence KTVSYRTTPSG.

In terms of assembly, interacts (via chromo domain) with histone H3K9me3.

The protein localises to the nucleus. The polypeptide is Chromodomain Y-like protein 2 (Cdyl2) (Mus musculus (Mouse)).